The sequence spans 755 residues: Polyribonucleotide nucleotidyltransferase (755 aa).

2 residues coordinate Mg(2+): Asp-493 and Asp-499. The KH domain maps to 560–619 (PRIMTIQIPVDKIGALIGPGGKTIRNICETTGAQIDIEDDGRVFITTPDGAAARQAISMI). One can recognise an S1 motif domain in the interval 629–698 (GDIFLGKVVS…TTGKISLSRR (70 aa)). Positions 699-755 (AVLTGETPEERKAAGAAPRPRPREEQRGGRDEPRSLRDELRGPRREGDRPRPRRRDD) are disordered. Over residues 719–755 (RPREEQRGGRDEPRSLRDELRGPRREGDRPRPRRRDD) the composition is skewed to basic and acidic residues.

This sequence belongs to the polyribonucleotide nucleotidyltransferase family. Mg(2+) is required as a cofactor.

It is found in the cytoplasm. The enzyme catalyses RNA(n+1) + phosphate = RNA(n) + a ribonucleoside 5'-diphosphate. Its function is as follows. Involved in mRNA degradation. Catalyzes the phosphorolysis of single-stranded polyribonucleotides processively in the 3'- to 5'-direction. The sequence is that of Polyribonucleotide nucleotidyltransferase from Chloroflexus aurantiacus (strain ATCC 29366 / DSM 635 / J-10-fl).